Here is a 312-residue protein sequence, read N- to C-terminus: Eukaryotic translation initiation factor 2 subunit 2 (312 aa).

Disordered regions lie at residues 26-104 (AALG…NLDM) and 125-146 (ADQA…SSTW). Ser-44 bears the Phosphoserine mark. Acidic residues-rich tracts occupy residues 90–102 (AASE…EINL) and 125–142 (ADQA…DEDN). Phosphoserine is present on Ser-133. Thr-145 is modified (phosphothreonine). The segment at 260–284 (CHTCRSPETILQKDTRLFFLQCESC) adopts a C4-type zinc-finger fold.

It belongs to the eIF-2-beta/eIF-5 family. As to quaternary structure, eukaryotic translation initiation factor 2 eIF2 is a heterotrimeric complex composed of an alpha, a beta and a gamma subunit.

It is found in the cytoplasm. It localises to the cytosol. Component of the eIF2 complex that functions in the early steps of protein synthesis by forming a ternary complex with GTP and initiator tRNA. This complex binds to a 40S ribosomal subunit, followed by mRNA binding to form a 43S pre-initiation complex (43S PIC). Junction of the 60S ribosomal subunit to form the 80S initiation complex is preceded by hydrolysis of the GTP bound to eIF2 and release of an eIF2-GDP binary complex. In order for eIF2 to recycle and catalyze another round of initiation, the GDP bound to eIF2 must exchange with GTP by way of a reaction catalyzed by eIF2B. This chain is Eukaryotic translation initiation factor 2 subunit 2, found in Drosophila melanogaster (Fruit fly).